The chain runs to 280 residues: 2-dehydro-3-deoxyphosphooctonate aldolase (280 aa).

This sequence belongs to the KdsA family.

It localises to the cytoplasm. The catalysed reaction is D-arabinose 5-phosphate + phosphoenolpyruvate + H2O = 3-deoxy-alpha-D-manno-2-octulosonate-8-phosphate + phosphate. Its pathway is carbohydrate biosynthesis; 3-deoxy-D-manno-octulosonate biosynthesis; 3-deoxy-D-manno-octulosonate from D-ribulose 5-phosphate: step 2/3. It functions in the pathway bacterial outer membrane biogenesis; lipopolysaccharide biosynthesis. This is 2-dehydro-3-deoxyphosphooctonate aldolase from Neisseria meningitidis serogroup A / serotype 4A (strain DSM 15465 / Z2491).